Consider the following 381-residue polypeptide: Arf-GAP with dual PH domain-containing protein 2 (381 aa).

The region spanning 9 to 131 (KRLLELLRAP…FMADGETISL (123 aa)) is the Arf-GAP domain. The segment at 25–48 (CADCGAADPDWASYKLGIFICLNC) adopts a C4-type zinc-finger fold. PH domains lie at 132 to 233 (PGNR…AARL) and 255 to 361 (NYLK…GVLS).

In terms of tissue distribution, highly expressed in placenta, spleen, kidney, skeletal muscle and adrenal gland. Weakly expressed in thyroid, liver, heart, lung, small intestine, peripheral blood leukocytes. Not detected in spinal cord, brain, stomach, trachea, colon, lymph node and bone marrow.

The protein localises to the cytoplasm. The protein resides in the cell membrane. GTPase-activating protein for the ADP ribosylation factor family (Potential). Binds phosphatidylinositol 3,4,5-trisphosphate (PtdInsP3) and inositol 1,3,4,5-tetrakisphosphate (InsP4). Possesses a stoichiometry of two binding sites for InsP4 with identical affinity. This Homo sapiens (Human) protein is Arf-GAP with dual PH domain-containing protein 2 (ADAP2).